A 163-amino-acid chain; its full sequence is Nucleotide-binding protein NT01EI_1072 (163 aa).

It belongs to the YajQ family.

Its function is as follows. Nucleotide-binding protein. This is Nucleotide-binding protein NT01EI_1072 from Edwardsiella ictaluri (strain 93-146).